A 313-amino-acid polypeptide reads, in one-letter code: ADP-L-glycero-D-manno-heptose-6-epimerase (313 aa).

Residues 10 to 11, 31 to 32, Lys38, Lys53, 75 to 79, and Asn92 each bind NADP(+); these read MI, DN, and EGACS. Tyr139 (proton acceptor) is an active-site residue. Position 143 (Lys143) interacts with NADP(+). Substrate is bound at residue Asn174. NADP(+) is bound by residues Val175 and Lys183. The Proton acceptor role is filled by Lys183. Residues Ser185, His192, 206 to 209, Arg214, and Tyr277 contribute to the substrate site; that span reads FEGS.

Belongs to the NAD(P)-dependent epimerase/dehydratase family. HldD subfamily. Homopentamer. NADP(+) serves as cofactor.

The catalysed reaction is ADP-D-glycero-beta-D-manno-heptose = ADP-L-glycero-beta-D-manno-heptose. It functions in the pathway nucleotide-sugar biosynthesis; ADP-L-glycero-beta-D-manno-heptose biosynthesis; ADP-L-glycero-beta-D-manno-heptose from D-glycero-beta-D-manno-heptose 7-phosphate: step 4/4. Catalyzes the interconversion between ADP-D-glycero-beta-D-manno-heptose and ADP-L-glycero-beta-D-manno-heptose via an epimerization at carbon 6 of the heptose. The chain is ADP-L-glycero-D-manno-heptose-6-epimerase from Aliivibrio fischeri (strain MJ11) (Vibrio fischeri).